A 162-amino-acid chain; its full sequence is NADH-quinone oxidoreductase subunit I (162 aa).

4Fe-4S ferredoxin-type domains follow at residues 52–82 (LRRYPNGEERCIACKLCEAICPAQAITIEAG) and 93–122 (TRYDIDMVKCIYCGMCQEACPVDAIVEGPN). Positions 62, 65, 68, 72, 102, 105, 108, and 112 each coordinate [4Fe-4S] cluster.

It belongs to the complex I 23 kDa subunit family. NDH-1 is composed of 14 different subunits. Subunits NuoA, H, J, K, L, M, N constitute the membrane sector of the complex. It depends on [4Fe-4S] cluster as a cofactor.

It is found in the cell inner membrane. The catalysed reaction is a quinone + NADH + 5 H(+)(in) = a quinol + NAD(+) + 4 H(+)(out). NDH-1 shuttles electrons from NADH, via FMN and iron-sulfur (Fe-S) centers, to quinones in the respiratory chain. The immediate electron acceptor for the enzyme in this species is believed to be ubiquinone. Couples the redox reaction to proton translocation (for every two electrons transferred, four hydrogen ions are translocated across the cytoplasmic membrane), and thus conserves the redox energy in a proton gradient. In Methylobacterium radiotolerans (strain ATCC 27329 / DSM 1819 / JCM 2831 / NBRC 15690 / NCIMB 10815 / 0-1), this protein is NADH-quinone oxidoreductase subunit I.